The sequence spans 1597 residues: Rho guanine nucleotide exchange factor 5 (1597 aa).

3 disordered regions span residues 138–246 (PFSS…EGTL), 258–455 (EEQM…SLEP), and 467–1072 (GSFL…VFRE). A Phosphoserine modification is found at Ser-184. A compositionally biased stretch (polar residues) spans 192–204 (ETNQNEGSESGTI). Residues 217–237 (ESQGLLHPQEVQVLEEQGQQE) show a composition bias toward low complexity. Positions 266–278 (NDEKGEQKQKQEQ) are enriched in basic and acidic residues. Residues 299–309 (GLNDGEWEQED) are compositionally biased toward acidic residues. Composition is skewed to basic and acidic residues over residues 323-368 (GEER…KEKG) and 394-404 (RSREEENEHHG). Polar residues predominate over residues 428-438 (LMTQIPGTQTE). Ser-445 and Ser-450 each carry phosphoserine. Positions 474–490 (SPDKEIDQNSQQEESRL) are enriched in basic and acidic residues. Over residues 512 to 522 (PRTPDSAPPSP) the composition is skewed to pro residues. Polar residues-rich tracts occupy residues 583-601 (STGT…TVQH) and 655-682 (DYST…NLER). The segment covering 731–746 (QRRDTHPSVVETDGHA) has biased composition (basic and acidic residues). Composition is skewed to pro residues over residues 812 to 828 (PLPP…PPIS) and 838 to 856 (PLPP…PLPP). An Asymmetric dimethylarginine modification is found at Arg-866. Residues 901 to 920 (ATARSTESFTSTSRSKSEVS) show a composition bias toward low complexity. Positions 926–941 (SNMTNFLCPSSPTTPW) are enriched in polar residues. The segment covering 950-969 (SKDEAGVSEHPEAPAREPLR) has biased composition (basic and acidic residues). Residues Ser-983, Ser-1011, and Ser-1044 each carry the phosphoserine modification. Basic and acidic residues predominate over residues 990–1012 (QPEKPSHLHLEKASSWPHRRDSG). Basic and acidic residues predominate over residues 1057–1072 (AVEKHPGPSDTVVFRE). The residue at position 1126 (Ser-1126) is a Phosphoserine. The 185-residue stretch at 1174–1358 (KLQEVKFELI…EQLIRDCNNN (185 aa)) folds into the DH domain. A PH domain is found at 1390–1502 (WLVKSGELTA…WISALAMPRE (113 aa)). Residues 1510-1571 (YNSPQVQCLR…PVQQVEFISN (62 aa)) enclose the SH3 domain.

In terms of assembly, interacts with SRC. Forms a ternary complex with SRC and the PI3K 85 kDa subunit. Interacts with and is activated by the heterodimer formed by GNB1 and GNG2. Interacts with ODAM (via C-terminus). Interacts with RHOA. Post-translationally, activation of SRC induces tyrosine phosphorylation of ARHGEF5. As to expression, ubiquitously expressed with highest levels in placenta. High levels are also found in colon, kidney, trachea, prostate, liver, pancreas, pituitary gland, thyroid gland and mammary gland. In fetal tissues, expressed at high levels in kidney, lung and liver. Expressed at low levels in lung and heart.

The protein localises to the cytoplasm. Its subcellular location is the nucleus. It localises to the cell projection. It is found in the podosome. Guanine nucleotide exchange factor which activates Rho GTPases. Strongly activates RHOA. Also strongly activates RHOB, weakly activates RHOC and RHOG and shows no effect on RHOD, RHOV, RHOQ or RAC1. Involved in regulation of cell shape and actin cytoskeletal organization. Plays a role in actin organization by generating a loss of actin stress fibers and the formation of membrane ruffles and filopodia. Required for SRC-induced podosome formation. Involved in positive regulation of immature dendritic cell migration. This chain is Rho guanine nucleotide exchange factor 5 (ARHGEF5), found in Homo sapiens (Human).